The following is a 397-amino-acid chain: Enoyl-[acyl-carrier-protein] reductase [NADH] (397 aa).

Residues 48-53 (GASTGY), 74-75 (FE), 111-112 (DA), and 139-140 (LA) each bind NAD(+). Tyr-225 is a binding site for substrate. Tyr-235 acts as the Proton donor in catalysis. Residues Lys-244 and 273 to 275 (VVT) each bind NAD(+).

Belongs to the TER reductase family. As to quaternary structure, monomer.

The enzyme catalyses a 2,3-saturated acyl-[ACP] + NAD(+) = a (2E)-enoyl-[ACP] + NADH + H(+). It participates in lipid metabolism; fatty acid biosynthesis. Involved in the final reduction of the elongation cycle of fatty acid synthesis (FAS II). Catalyzes the reduction of a carbon-carbon double bond in an enoyl moiety that is covalently linked to an acyl carrier protein (ACP). The polypeptide is Enoyl-[acyl-carrier-protein] reductase [NADH] (Edwardsiella ictaluri (strain 93-146)).